The sequence spans 753 residues: Striatin-4 (753 aa).

The tract at residues 10–65 (VAAAASSCRPLGSGAGPGPTGAAPVSAPAPGPGPAGKGGGGGGSPGPTAGPEPLSL) is disordered. The segment covering 43–54 (PAGKGGGGGGSP) has biased composition (gly residues). S53 is modified (phosphoserine). Residues 69-136 (LHFIQHEWAR…QERAKYHKLK (68 aa)) adopt a coiled-coil conformation. The segment at 71–79 (FIQHEWARF) is caveolin-binding. The calmodulin-binding stretch occupies residues 165–182 (ENSPLVWKEGRQLLRQYL). S206 carries the phosphoserine modification. Disordered regions lie at residues 213-232 (VEPS…LSGG), 271-345 (CEDE…SPHE), and 363-382 (VDGL…QPRP). 2 stretches are compositionally biased toward acidic residues: residues 271–283 (CEDE…DELD) and 302–317 (EMED…DAIN). S276 is subject to Phosphoserine. The span at 332–345 (PDPRRCTVDGSPHE) shows a compositional bias: basic and acidic residues. Residues 370-380 (VTGPPPGTPQP) are compositionally biased toward pro residues. 7 WD repeats span residues 436 to 475 (SHYD…TAKK), 489 to 528 (AHRG…MDPY), 542 to 581 (GHGD…PACL), 587 to 628 (ASEH…ALLT), 635 to 674 (SGPT…PVHS), 677 to 716 (AHLD…CVQE), and 723 to 753 (KHEE…KVFV).

The protein belongs to the WD repeat striatin family. In terms of assembly, part of the core of STRIPAK complexes composed of PP2A catalytic and scaffolding subunits, the striatins (PP2A regulatory subunits), the striatin-associated proteins MOB4, STRIP1 and STRIP2, PDCD10 and members of the STE20 kinases, such as STK24 and STK26. Interacts with CTTNBP2NL.

Its subcellular location is the cytoplasm. In terms of biological role, calmodulin-binding scaffolding protein which is the center of the striatin-interacting phosphatase and kinase (STRIPAK) complexes. STRIPAK complexes have critical roles in protein (de)phosphorylation and are regulators of multiple signaling pathways including Hippo, MAPK, nuclear receptor and cytoskeleton remodeling. Different types of STRIPAK complexes are involved in a variety of biological processes such as cell growth, differentiation, apoptosis, metabolism and immune regulation. Key regulator of the expanded Hippo signaling pathway by interacting and allowing the inhibition of MAP4K kinases by the STRIPAK complex. In Homo sapiens (Human), this protein is Striatin-4.